Here is a 312-residue protein sequence, read N- to C-terminus: Pyridoxal kinase (312 aa).

An N-acetylmethionine modification is found at methionine 1. Serine 12 and threonine 47 together coordinate pyridoxal. Threonine 47 contacts pyridoxal 5'-phosphate. Position 59 is a phosphoserine (serine 59). Residue aspartate 113 coordinates ATP. Aspartate 113 contributes to the Na(+) binding site. Residue aspartate 118 coordinates Mg(2+). Threonine 148 is a binding site for Na(+). 150–153 serves as a coordination point for ATP; the sequence is NQFE. Serine 164 carries the phosphoserine modification. Residue threonine 186 participates in Na(+) binding. 186 to 187 contributes to the ATP binding site; that stretch reads TS. Phosphoserine is present on serine 213. ATP-binding positions include 226–228 and threonine 233; that span reads VEA. Position 234 to 235 (234 to 235) interacts with pyridoxal 5'-phosphate; it reads GD. Aspartate 235 (proton acceptor) is an active-site residue. Serine 285 is modified (phosphoserine).

Belongs to the pyridoxine kinase family. As to quaternary structure, homodimer. The cofactor is Zn(2+). Requires Mg(2+) as cofactor.

Its subcellular location is the cytoplasm. The protein localises to the cytosol. The catalysed reaction is pyridoxal + ATP = pyridoxal 5'-phosphate + ADP + H(+). It catalyses the reaction pyridoxamine + ATP = pyridoxamine 5'-phosphate + ADP + H(+). The enzyme catalyses pyridoxine + ATP = pyridoxine 5'-phosphate + ADP + H(+). It functions in the pathway cofactor metabolism; pyridoxal 5'-phosphate salvage; pyridoxal 5'-phosphate from pyridoxal: step 1/1. It participates in cofactor metabolism; pyridoxal 5'-phosphate salvage; pyridoxine 5'-phosphate from pyridoxine: step 1/1. Its pathway is cofactor metabolism; pyridoxal 5'-phosphate salvage; pyridoxamine 5'-phosphate from pyridoxamine: step 1/1. With respect to regulation, activity is increased in the presence of K(+)or Na(+). Functionally, catalyzes the phosphorylation of the dietary vitamin B6 vitamers pyridoxal (PL), pyridoxine (PN) and pyridoxamine (PM) to form pyridoxal 5'-phosphate (PLP), pyridoxine 5'-phosphate (PNP) and pyridoxamine 5'-phosphate (PMP), respectively. PLP is the active form of vitamin B6, and acts as a cofactor for over 140 different enzymatic reactions. This chain is Pyridoxal kinase, found in Mus musculus (Mouse).